Consider the following 92-residue polypeptide: Putative transcription elongation factor S-II-like protein 81R (92 aa).

A TFIIS-type zinc finger spans residues 51 to 91 (GTVKCPGCGSRRVHALQRQTRSADEPMTLFAMCSECGKRWT). Positions 55, 58, 83, and 86 each coordinate Zn(2+).

The chain is Putative transcription elongation factor S-II-like protein 81R from Dryophytes versicolor (chameleon treefrog).